A 157-amino-acid polypeptide reads, in one-letter code: D-aminoacyl-tRNA deacylase (157 aa).

Residues 137–138 carry the Gly-cisPro motif, important for rejection of L-amino acids motif; the sequence is GP.

The protein belongs to the DTD family. In terms of assembly, homodimer.

Its subcellular location is the cytoplasm. It carries out the reaction glycyl-tRNA(Ala) + H2O = tRNA(Ala) + glycine + H(+). The enzyme catalyses a D-aminoacyl-tRNA + H2O = a tRNA + a D-alpha-amino acid + H(+). An aminoacyl-tRNA editing enzyme that deacylates mischarged D-aminoacyl-tRNAs. Also deacylates mischarged glycyl-tRNA(Ala), protecting cells against glycine mischarging by AlaRS. Acts via tRNA-based rather than protein-based catalysis; rejects L-amino acids rather than detecting D-amino acids in the active site. By recycling D-aminoacyl-tRNA to D-amino acids and free tRNA molecules, this enzyme counteracts the toxicity associated with the formation of D-aminoacyl-tRNA entities in vivo and helps enforce protein L-homochirality. This is D-aminoacyl-tRNA deacylase from Roseiflexus castenholzii (strain DSM 13941 / HLO8).